Reading from the N-terminus, the 191-residue chain is Classical arabinogalactan protein 9 (191 aa).

The first 20 residues, 1–20, serve as a signal peptide directing secretion; sequence MARSFAIAVICIVLIAGVTG. Positions 20–172 are disordered; the sequence is GQAPTSPPTA…SPTDVNDQNG (153 aa). The residue at position 21 (Q21) is a Pyrrolidone carboxylic acid. P23, P26, P27, P31, and P33 each carry 4-hydroxyproline. Positions 24 to 146 are enriched in pro residues; it reads TSPPTATPAP…PSPSSSPPLP (123 aa). O-linked (Ara...) hydroxyproline glycosylation is found at P26, P27, P31, and P33. The span at 155 to 172 shows a compositional bias: polar residues; sequence TDSISPAPSPTDVNDQNG. A lipid anchor (GPI-anchor amidated glycine) is attached at G172. Positions 173–191 are cleaved as a propeptide — removed in mature form; that stretch reads ASKMVSSLVFGSVLVWFMI.

It belongs to the classical AGP family. O-glycosylated on hydroxyprolines; noncontiguous hydroxylproline residues are glycosylated with arabinogalactan. Predominantly expressed in flowers and at a lower level in leaves and siliques.

Its subcellular location is the cell membrane. Functionally, proteoglycan that seems to be implicated in diverse developmental roles such as differentiation, cell-cell recognition, embryogenesis and programmed cell death. The chain is Classical arabinogalactan protein 9 (AGP9) from Arabidopsis thaliana (Mouse-ear cress).